Consider the following 259-residue polypeptide: 5'-nucleotidase SurE (259 aa).

Residues Asp-11, Asp-12, Ser-42, and Asn-99 each contribute to the a divalent metal cation site.

The protein belongs to the SurE nucleotidase family. A divalent metal cation is required as a cofactor.

It is found in the cytoplasm. The catalysed reaction is a ribonucleoside 5'-phosphate + H2O = a ribonucleoside + phosphate. In terms of biological role, nucleotidase that shows phosphatase activity on nucleoside 5'-monophosphates. This chain is 5'-nucleotidase SurE, found in Cytophaga hutchinsonii (strain ATCC 33406 / DSM 1761 / CIP 103989 / NBRC 15051 / NCIMB 9469 / D465).